Here is a 406-residue protein sequence, read N- to C-terminus: Argininosuccinate synthase (406 aa).

ATP is bound by residues 11-19 (AYSGGLDTS) and A38. L-citrulline is bound by residues Y91 and S96. ATP is bound at residue G121. The L-aspartate site is built by T123, N127, and D128. Residue N127 participates in L-citrulline binding. Residues R131, S181, S190, E266, and Y278 each coordinate L-citrulline.

This sequence belongs to the argininosuccinate synthase family. Type 1 subfamily. Homotetramer.

It localises to the cytoplasm. The enzyme catalyses L-citrulline + L-aspartate + ATP = 2-(N(omega)-L-arginino)succinate + AMP + diphosphate + H(+). It participates in amino-acid biosynthesis; L-arginine biosynthesis; L-arginine from L-ornithine and carbamoyl phosphate: step 2/3. This chain is Argininosuccinate synthase, found in Campylobacter lari (strain RM2100 / D67 / ATCC BAA-1060).